The chain runs to 196 residues: Lipoprotein signal peptidase (196 aa).

A run of 3 helical transmembrane segments spans residues Leu43 to Phe63, Ala75 to Ser95, and Thr97 to Asp117. Catalysis depends on residues Asp126 and Asp144. A helical membrane pass occupies residues Tyr135 to Ile155.

It belongs to the peptidase A8 family.

It is found in the cell inner membrane. The catalysed reaction is Release of signal peptides from bacterial membrane prolipoproteins. Hydrolyzes -Xaa-Yaa-Zaa-|-(S,diacylglyceryl)Cys-, in which Xaa is hydrophobic (preferably Leu), and Yaa (Ala or Ser) and Zaa (Gly or Ala) have small, neutral side chains.. Its pathway is protein modification; lipoprotein biosynthesis (signal peptide cleavage). Functionally, this protein specifically catalyzes the removal of signal peptides from prolipoproteins. The chain is Lipoprotein signal peptidase from Rickettsia typhi (strain ATCC VR-144 / Wilmington).